The primary structure comprises 166 residues: NAD(P)H-quinone oxidoreductase subunit I, chloroplastic (166 aa).

4Fe-4S ferredoxin-type domains are found at residues glycine 55–lysine 84 and leucine 95–glutamate 124. Positions 64, 67, 70, 74, 104, 107, 110, and 114 each coordinate [4Fe-4S] cluster.

It belongs to the complex I 23 kDa subunit family. NDH is composed of at least 16 different subunits, 5 of which are encoded in the nucleus. It depends on [4Fe-4S] cluster as a cofactor.

It localises to the plastid. Its subcellular location is the chloroplast thylakoid membrane. The catalysed reaction is a plastoquinone + NADH + (n+1) H(+)(in) = a plastoquinol + NAD(+) + n H(+)(out). The enzyme catalyses a plastoquinone + NADPH + (n+1) H(+)(in) = a plastoquinol + NADP(+) + n H(+)(out). In terms of biological role, NDH shuttles electrons from NAD(P)H:plastoquinone, via FMN and iron-sulfur (Fe-S) centers, to quinones in the photosynthetic chain and possibly in a chloroplast respiratory chain. The immediate electron acceptor for the enzyme in this species is believed to be plastoquinone. Couples the redox reaction to proton translocation, and thus conserves the redox energy in a proton gradient. This Melampodium leucanthum (Black foot daisy) protein is NAD(P)H-quinone oxidoreductase subunit I, chloroplastic.